A 273-amino-acid chain; its full sequence is Outer surface protein A (273 aa).

The signal sequence occupies residues 1 to 16 (MKKYLLGIGLILALIA). C17 is lipidated: N-palmitoyl cysteine. A lipid anchor (S-diacylglycerol cysteine) is attached at C17.

Belongs to the OspA lipoprotein family.

It localises to the cell outer membrane. It is found in the cell surface. The protein is Outer surface protein A of Borreliella burgdorferi (strain N40) (Borrelia burgdorferi).